The chain runs to 429 residues: Adenylosuccinate synthetase (429 aa).

GTP contacts are provided by residues 12-18 (GDEGKGK) and 40-42 (GHT). Asp13 functions as the Proton acceptor in the catalytic mechanism. Residues Asp13 and Gly40 each contribute to the Mg(2+) site. Residues 13–16 (DEGK), 38–41 (NAGH), Thr128, Arg142, Gln223, Thr238, and Arg302 contribute to the IMP site. Residue His41 is the Proton donor of the active site. 298–304 (TTTGRPR) contacts substrate. GTP contacts are provided by residues Arg304, 330–332 (SID), and 412–414 (SVG).

The protein belongs to the adenylosuccinate synthetase family. In terms of assembly, homodimer. Mg(2+) serves as cofactor.

It is found in the cytoplasm. The enzyme catalyses IMP + L-aspartate + GTP = N(6)-(1,2-dicarboxyethyl)-AMP + GDP + phosphate + 2 H(+). It functions in the pathway purine metabolism; AMP biosynthesis via de novo pathway; AMP from IMP: step 1/2. Functionally, plays an important role in the de novo pathway of purine nucleotide biosynthesis. Catalyzes the first committed step in the biosynthesis of AMP from IMP. This is Adenylosuccinate synthetase from Bacillus cereus (strain ATCC 10987 / NRS 248).